The following is a 135-amino-acid chain: Protein PsiE homolog (135 aa).

4 consecutive transmembrane segments (helical) span residues 20-40 (VGLI…TIHL), 54-74 (YMLI…ALIV), 82-102 (HFPL…LIIV), and 107-127 (PIDT…LYLA).

It belongs to the PsiE family.

The protein resides in the cell inner membrane. The chain is Protein PsiE homolog from Yersinia pestis (strain Pestoides F).